The chain runs to 134 residues: Small ribosomal subunit protein uS9c (134 aa).

Belongs to the universal ribosomal protein uS9 family.

It is found in the plastid. It localises to the chloroplast. This chain is Small ribosomal subunit protein uS9c (rps9), found in Guillardia theta (Cryptophyte).